Here is a 94-residue protein sequence, read N- to C-terminus: Putative regulatory protein Tmel_0100 (94 aa).

Belongs to the RemA family.

In Thermosipho melanesiensis (strain DSM 12029 / CIP 104789 / BI429), this protein is Putative regulatory protein Tmel_0100.